We begin with the raw amino-acid sequence, 132 residues long: Small ribosomal subunit protein uS8 (132 aa).

Belongs to the universal ribosomal protein uS8 family. As to quaternary structure, part of the 30S ribosomal subunit. Contacts proteins S5 and S12.

Functionally, one of the primary rRNA binding proteins, it binds directly to 16S rRNA central domain where it helps coordinate assembly of the platform of the 30S subunit. The sequence is that of Small ribosomal subunit protein uS8 from Mycolicibacterium vanbaalenii (strain DSM 7251 / JCM 13017 / BCRC 16820 / KCTC 9966 / NRRL B-24157 / PYR-1) (Mycobacterium vanbaalenii).